The following is a 553-amino-acid chain: CTP synthase (553 aa).

Positions 1–277 (MPTEPETDYD…DQYVMEELDI (277 aa)) are amidoligase domain. Ser-26 lines the CTP pocket. Ser-26 is a UTP binding site. ATP contacts are provided by residues 27–32 (GLGKGI) and Asp-84. Mg(2+)-binding residues include Asp-84 and Glu-152. CTP is bound by residues 159–161 (DIE), 198–203 (KTKPTQ), and Lys-234. Residues 198-203 (KTKPTQ) and Lys-234 contribute to the UTP site. ATP is bound at residue Val-252. Residues 307 to 544 (LVGKYDLEDA…LEAVLGDDPH (238 aa)) form the Glutamine amidotransferase type-1 domain. Gly-364 lines the L-glutamine pocket. The active-site Nucleophile; for glutamine hydrolysis is Cys-391. L-glutamine is bound by residues 392–395 (LGFQ), Glu-415, and Arg-472. Active-site residues include His-517 and Glu-519.

The protein belongs to the CTP synthase family. Homotetramer.

Its subcellular location is the cytoplasm. The catalysed reaction is UTP + L-glutamine + ATP + H2O = CTP + L-glutamate + ADP + phosphate + 2 H(+). The enzyme catalyses L-glutamine + H2O = L-glutamate + NH4(+). It catalyses the reaction UTP + NH4(+) + ATP = CTP + ADP + phosphate + 2 H(+). Its pathway is pyrimidine metabolism; CTP biosynthesis via de novo pathway; CTP from UDP: step 2/2. With respect to regulation, allosterically activated by GTP, when glutamine is the substrate; GTP has no effect on the reaction when ammonia is the substrate. The allosteric effector GTP functions by stabilizing the protein conformation that binds the tetrahedral intermediate(s) formed during glutamine hydrolysis. Inhibited by the product CTP, via allosteric rather than competitive inhibition. Inhibited by 6-diazo-5-oxo-l-norleucine (DON). Functionally, catalyzes the ATP-dependent amination of UTP to CTP with either L-glutamine or ammonia as the source of nitrogen. Regulates intracellular CTP levels through interactions with the four ribonucleotide triphosphates. In Haloarcula hispanica (strain ATCC 33960 / DSM 4426 / JCM 8911 / NBRC 102182 / NCIMB 2187 / VKM B-1755), this protein is CTP synthase.